Here is a 235-residue protein sequence, read N- to C-terminus: 2-C-methyl-D-erythritol 4-phosphate cytidylyltransferase (235 aa).

The protein belongs to the IspD/TarI cytidylyltransferase family. IspD subfamily.

It catalyses the reaction 2-C-methyl-D-erythritol 4-phosphate + CTP + H(+) = 4-CDP-2-C-methyl-D-erythritol + diphosphate. It functions in the pathway isoprenoid biosynthesis; isopentenyl diphosphate biosynthesis via DXP pathway; isopentenyl diphosphate from 1-deoxy-D-xylulose 5-phosphate: step 2/6. Catalyzes the formation of 4-diphosphocytidyl-2-C-methyl-D-erythritol from CTP and 2-C-methyl-D-erythritol 4-phosphate (MEP). This Pseudomonas entomophila (strain L48) protein is 2-C-methyl-D-erythritol 4-phosphate cytidylyltransferase.